The sequence spans 268 residues: GTP cyclohydrolase FolE2 (268 aa).

Belongs to the GTP cyclohydrolase IV family.

It catalyses the reaction GTP + H2O = 7,8-dihydroneopterin 3'-triphosphate + formate + H(+). The protein operates within cofactor biosynthesis; 7,8-dihydroneopterin triphosphate biosynthesis; 7,8-dihydroneopterin triphosphate from GTP: step 1/1. Functionally, converts GTP to 7,8-dihydroneopterin triphosphate. The chain is GTP cyclohydrolase FolE2 from Paraburkholderia xenovorans (strain LB400).